The primary structure comprises 230 residues: All-trans retinoic acid-induced differentiation factor (230 aa).

The first 26 residues, 1–26 (MTANVTVSSMYLFTVLLLLFNVYVNS), serve as a signal peptide directing secretion. Topologically, residues 27-200 (QDTDAQLCQM…YKCMRQGEFP (174 aa)) are extracellular. The EGF-like domain maps to 152–194 (QKNACNQTVQMPLVCPENSLCSPYGPGFFECSCLNNFHGYKCM). Intrachain disulfides connect Cys-156–Cys-172, Cys-166–Cys-182, and Cys-184–Cys-193. The helical transmembrane segment at 201–221 (LVKVLGILTASTVVVSSVLWF) threads the bilayer. The Cytoplasmic segment spans residues 222-230 (TQRRKVKNT).

The protein resides in the nucleus envelope. It localises to the cell membrane. Its subcellular location is the lysosome membrane. In terms of biological role, involved in osteoblast cell differentiation. May play a role in inducing the cell cycle arrest. In Danio rerio (Zebrafish), this protein is All-trans retinoic acid-induced differentiation factor (atraid).